We begin with the raw amino-acid sequence, 124 residues long: Urocortin (124 aa).

The N-terminal stretch at 1–25 (MRQAGRAALLAALLLLVQLCPGSSQ) is a signal peptide. The disordered stretch occupies residues 23 to 46 (SSQRSPEAAGVQDPSLRWSPGARN). Residues 26-82 (RSPEAAGVQDPSLRWSPGARNQGGGARALLLLLAERFPRRAGPGRLGLGTAGERPRR) constitute a propeptide that is removed on maturation. The residue at position 122 (valine 122) is a Valine amide.

Belongs to the sauvagine/corticotropin-releasing factor/urotensin I family. In terms of assembly, interacts with CRHR1 and CRHR2 (via their N-terminal extracellular domain). As to expression, keratinocytes in epidermis and the outer and inner root sheaths of hair follicles, epithelium of sebaceous and sweat glands, erector pili muscle, cutaneous blood vessel walls, cutaneous nerves and dermal mononuclear cells. Detected in plasma cells in the lamia propria in colon mucosa (at protein level). Expressed in pituitary and adrenal glands. Detected in plasma cells in the lamia propria in colon mucosa.

It localises to the secreted. Its function is as follows. Acts in vitro to stimulate the secretion of adrenocorticotropic hormone (ACTH). Binds with high affinity to CRF receptor types 1, 2-alpha, and 2-beta. Plays a role in the establishment of normal hearing thresholds. Reduces food intake and regulates ghrelin levels in gastric body and plasma. This Homo sapiens (Human) protein is Urocortin (UCN).